Reading from the N-terminus, the 161-residue chain is SsrA-binding protein (161 aa).

The protein belongs to the SmpB family.

The protein localises to the cytoplasm. Required for rescue of stalled ribosomes mediated by trans-translation. Binds to transfer-messenger RNA (tmRNA), required for stable association of tmRNA with ribosomes. tmRNA and SmpB together mimic tRNA shape, replacing the anticodon stem-loop with SmpB. tmRNA is encoded by the ssrA gene; the 2 termini fold to resemble tRNA(Ala) and it encodes a 'tag peptide', a short internal open reading frame. During trans-translation Ala-aminoacylated tmRNA acts like a tRNA, entering the A-site of stalled ribosomes, displacing the stalled mRNA. The ribosome then switches to translate the ORF on the tmRNA; the nascent peptide is terminated with the 'tag peptide' encoded by the tmRNA and targeted for degradation. The ribosome is freed to recommence translation, which seems to be the essential function of trans-translation. In Vesicomyosocius okutanii subsp. Calyptogena okutanii (strain HA), this protein is SsrA-binding protein.